Here is a 160-residue protein sequence, read N- to C-terminus: Lipoprotein signal peptidase (160 aa).

2 helical membrane passes run 60–80 (TEWL…AFFL) and 84–104 (LPFL…AGTI). Residues aspartate 118 and aspartate 132 contribute to the active site. The helical transmembrane segment at 127–147 (TFNMADSCLTLGIIWLVLLYL) threads the bilayer.

This sequence belongs to the peptidase A8 family.

It localises to the cell membrane. It carries out the reaction Release of signal peptides from bacterial membrane prolipoproteins. Hydrolyzes -Xaa-Yaa-Zaa-|-(S,diacylglyceryl)Cys-, in which Xaa is hydrophobic (preferably Leu), and Yaa (Ala or Ser) and Zaa (Gly or Ala) have small, neutral side chains.. The protein operates within protein modification; lipoprotein biosynthesis (signal peptide cleavage). Functionally, this protein specifically catalyzes the removal of signal peptides from prolipoproteins. The sequence is that of Lipoprotein signal peptidase from Dehalococcoides mccartyi (strain ATCC BAA-2266 / KCTC 15142 / 195) (Dehalococcoides ethenogenes (strain 195)).